We begin with the raw amino-acid sequence, 245 residues long: Tetrahydromethanopterin S-methyltransferase subunit A 1 (245 aa).

Residues 1–222 (MADKKPAADN…AGNYSGKVQG (222 aa)) lie on the Cytoplasmic side of the membrane. A 5-hydroxybenzimidazolylcob(I)amide-binding site is contributed by histidine 84. A helical transmembrane segment spans residues 223-243 (IMIGLIFTLVIGFLLLMAPLL). Over 244-245 (GA) the chain is Extracellular.

The protein belongs to the MtrA family. In terms of assembly, the complex is composed of 8 subunits; MtrA, MtrB, MtrC, MtrD, MtrE, MtrF, MtrG and MtrH. 5-hydroxybenzimidazolylcob(I)amide is required as a cofactor.

Its subcellular location is the cell membrane. It carries out the reaction 5-methyl-5,6,7,8-tetrahydromethanopterin + coenzyme M + 2 Na(+)(in) = 5,6,7,8-tetrahydromethanopterin + methyl-coenzyme M + 2 Na(+)(out). It participates in one-carbon metabolism; methanogenesis from CO(2); methyl-coenzyme M from 5,10-methylene-5,6,7,8-tetrahydromethanopterin: step 2/2. Part of a complex that catalyzes the formation of methyl-coenzyme M and tetrahydromethanopterin from coenzyme M and methyl-tetrahydromethanopterin. This is an energy-conserving, sodium-ion translocating step. This Methanobrevibacter ruminantium (strain ATCC 35063 / DSM 1093 / JCM 13430 / OCM 146 / M1) (Methanobacterium ruminantium) protein is Tetrahydromethanopterin S-methyltransferase subunit A 1.